A 357-amino-acid chain; its full sequence is MSMRPVPGSLSSLLHLHNRQRQPMPASMPGTLPNPTMPGSSAVLMPMERQMSVNSSIMGMQGPNLSNPCASPQVQPMHSEAKMRLKAALTHHPAAMSNGNMSTIGHMMEMMGSRQDQTPHHHLHSHPHQHQTLPPHHPYPHQHQHPAHHPHPQPHHQQNHPHHHSHSHLHAHPAHHQTSPHPPLHTGNQAQVSPATQQMQPTQTIQPPQPTGGRRRRVVDEDPDERRRKFLERNRAAATRCRQKRKVWVMSLEKKAEELTQTNMQLQNEVSMLKNEVAQLKQLLLTHKDCPITAMQKESQGYLSPESSPPASPVPACSQQQVIQHNTITTSSSVSEVVGSSTLSQLTTHRTDLNPIL.

The tract at residues 114-239 (RQDQTPHHHL…FLERNRAAAT (126 aa)) is disordered. Composition is skewed to basic residues over residues 120–129 (HHHLHSHPHQ) and 138–175 (PYPH…HPAH). Polar residues predominate over residues 186 to 195 (TGNQAQVSPA). Positions 196 to 206 (TQQMQPTQTIQ) are enriched in low complexity. The segment covering 218-235 (VVDEDPDERRRKFLERNR) has biased composition (basic and acidic residues). The bZIP domain occupies 224–287 (DERRRKFLER…AQLKQLLLTH (64 aa)). The basic motif stretch occupies residues 226–246 (RRRKFLERNRAAATRCRQKRK). Residues 252–280 (LEKKAEELTQTNMQLQNEVSMLKNEVAQL) are leucine-zipper. The disordered stretch occupies residues 298 to 318 (ESQGYLSPESSPPASPVPACS).

It belongs to the bZIP family. In terms of assembly, binds DNA as a homodimer or as a heterodimer with JUN or ATF2/CREBP1.

It is found in the nucleus. In terms of biological role, binds to the cAMP response element and activates transcription. The protein is Cyclic AMP-responsive element-binding protein 5 (Creb5) of Mus musculus (Mouse).